Here is a 120-residue protein sequence, read N- to C-terminus: Large ribosomal subunit protein uL18 (120 aa).

It belongs to the universal ribosomal protein uL18 family. Part of the 50S ribosomal subunit; part of the 5S rRNA/L5/L18/L25 subcomplex. Contacts the 5S and 23S rRNAs.

This is one of the proteins that bind and probably mediate the attachment of the 5S RNA into the large ribosomal subunit, where it forms part of the central protuberance. This chain is Large ribosomal subunit protein uL18, found in Herminiimonas arsenicoxydans.